A 175-amino-acid chain; its full sequence is MEKISVSAFLLLVALSYTLARDTTVKPAAKKDTKDSRPKLPQTLSRGWGDQLIWTQTYEEALYKSKTSNKPLMIIHHLDECPHSQALKKVFAENKEIQKLAEQFVLLNLVYETTDKHLSPDGQYVPRIMFVDPSLTVRADITGRYSNRLYAYEPTDTALLLDNMKKALKLLKTEL.

An N-terminal signal peptide occupies residues 1–20 (MEKISVSAFLLLVALSYTLA). A required to promote cell adhesion region spans residues 21–40 (RDTTVKPAAKKDTKDSRPKL). 2 short sequence motifs (homodimer stabilization; interchain) span residues 45 to 54 (SRGWGDQLIW) and 60 to 67 (EALYKSKT).

The protein belongs to the AGR family. In terms of assembly, monomer and homodimer. Interacts with LYPD3 and DAG1 (alphaDAG1). Interacts with MUC2; disulfide-linked.

It is found in the secreted. The protein resides in the endoplasmic reticulum. In terms of biological role, required for MUC2 post-transcriptional synthesis and secretion. May play a role in the production of mucus by intestinal cells. Proto-oncogene that may play a role in cell migration, cell differentiation and cell growth. Promotes cell adhesion. The polypeptide is Anterior gradient protein 2 homolog (AGR2) (Pongo abelii (Sumatran orangutan)).